The chain runs to 76 residues: Repressor protein of division inhibition gene dicB (76 aa).

A DNA-binding region spans residues 13–33; it reads KTKLAQAAGIRLASLYSWKGD.

Functionally, this protein is a repressor of division inhibition gene dicB. In Escherichia coli (strain K12), this protein is Repressor protein of division inhibition gene dicB (dicC).